The primary structure comprises 204 residues: Superoxide dismutase [Mn] (204 aa).

Mn(2+) contacts are provided by H29, H84, D167, and H171.

Belongs to the iron/manganese superoxide dismutase family. Homotetramer. It depends on Mn(2+) as a cofactor.

The catalysed reaction is 2 superoxide + 2 H(+) = H2O2 + O2. In terms of biological role, destroys superoxide anion radicals which are normally produced within the cells and which are toxic to biological systems. This Thermus aquaticus protein is Superoxide dismutase [Mn] (sodA).